The primary structure comprises 430 residues: Pre-B-cell leukemia transcription factor 2 (430 aa).

The disordered stretch occupies residues 1–52 (MDERLLGPPPPGGGRGGLGLVGAEPGGPGEPPGGGDPGGGSGGVPGGRGKQD). Residues 13 to 48 (GGRGGLGLVGAEPGGPGEPPGGGDPGGGSGGVPGGR) are compositionally biased toward gly residues. In terms of domain architecture, PBC spans 48 to 243 (RGKQDIGDIL…VMILRSRFLD (196 aa)). The segment at 55–134 (DILQQIMTIT…EGVAGPEKGG (80 aa)) is PBC-A. Residues serine 136, serine 151, and serine 159 each carry the phosphoserine modification. The interval 137–243 (AAAAAAAAAS…VMILRSRFLD (107 aa)) is PBC-B. The homeobox; TALE-type DNA-binding region spans 244–306 (ARRKRRNFSK…NKRIRYKKNI (63 aa)). Disordered stretches follow at residues 327–347 (GGHSRTSSPTPPSSAGSGGSF) and 375–430 (LRHS…DTSN). Phosphoserine occurs at positions 330 and 395. Residues 409–418 (VTPSSVTSPT) are compositionally biased toward polar residues.

Belongs to the TALE/PBX homeobox family. Forms heterodimers with MEIS1 and heterotrimers with MEIS1 and HOXA9. Interacts with PBXIP1.

The protein resides in the nucleus. Its function is as follows. Transcriptional activator that binds the sequence 5'-ATCAATCAA-3'. Activates transcription of PF4 in complex with MEIS1. The sequence is that of Pre-B-cell leukemia transcription factor 2 (Pbx2) from Mus musculus (Mouse).